The sequence spans 336 residues: Cytochrome P450 monooxygenase lcsN (336 aa).

Residue cysteine 271 participates in heme binding.

It belongs to the cytochrome P450 family. Requires heme as cofactor.

Its pathway is secondary metabolite biosynthesis. Its function is as follows. Cytochrome P450 monooxygenase; part of the gene cluster that mediates the biosynthesis of the lipopeptide antibiotics leucinostatins that show extensive biological activities, including antimalarial, antiviral, antibacterial, antifungal, and antitumor activities, as well as phytotoxic. Leucinostatin A contains nine amino acid residues, including the unusual amino acid 4-methyl-L-proline (MePro), 2-amino-6-hydroxy-4-methyl-8-oxodecanoic acid (AHyMeOA), 3-hydroxyleucine (HyLeu), alpha-aminoisobutyric acid (AIB), beta-Ala, a 4-methylhex-2-enoic acid at the N-terminus as well as a N1,N1-dimethylpropane-1,2-diamine (DPD) at the C-terminus. The biosynthesis of leucinostatins is probably initiated with the assembly of 4-methylhex-2-enoic acid by a reducing PKS. Two reducing polyketide synthases, lcsB and lcsC, have been identified in the cluster and it is not clear which is the one that assembles 4-methylhex-2-enoic acid since both contain KS, AT, DH, cMT, ER, KR and ACP domains. The polyketide residue might be transferred to the NRPS lcsA, mediated by two additional enzymes, the acyl-CoA ligase lcsD and the thioesterase lcsE. The linear polyketide carboxylic acid, which is released from PKS, is converted to a CoA thioester by lcsD, and then lcsE hydrolyzes the thiol bond and shuttles the polyketide intermediate to lcsA. The C domain of the first module catalyzed the condensation of 4-methylhex-2-enoic acid and MePro carried by domain A1, followed by successive condensations of nine amino acids to trigger the elongation of the linear peptide. A5 and A6 domains of lcsA are proposed to incorporate leucine, A2 AHyMeOA, and A3 incorporates HyLeu. A4, A7 and A8 incorporate AIB. The AHyMeOA in leucinostatin A activated by the A2 might be produced by the second PKS (lcsB or lcsC) present within the cluster. The MePro is probably produced via leucine cyclization and may originate from a separate pathway, independent of the cluster. Another nonproteinogenic amino acid, beta-Ala, could be produced by an aspartic acid decarboxylase also localized outside of the cluster. Two candidates are VFPBJ_01400 and VFPBJ_10476. The final peptide scaffold may be released by the NAD(P)H-dependent thioester reductase (TE) at the C-terminal region of lcsA. Transamination of the lcsA product by the transaminase lcsP may produce DPD at the C-terminus. Further hydroxylation steps performed alternatively by the cytochrome P450 monooxygenases lcsI, lcsK and lcsN then yield the non-methylated leucinostatins precursor. It is also possible that leucines can be hydroxylated prior to their incorporation into the peptide. Varying extents of methylation then lead to the formation of leucinostatins A and B. The sequence is that of Cytochrome P450 monooxygenase lcsN from Purpureocillium lilacinum (Paecilomyces lilacinus).